A 290-amino-acid polypeptide reads, in one-letter code: Undecaprenyl-diphosphatase (290 aa).

8 helical membrane passes run 1-21 (MALW…FLPV), 49-69 (MILF…VVFW), 101-121 (LFWL…TLKA), 126-146 (VFAS…LLWW), 160-180 (INLK…MPGL), 203-223 (YSFF…AIEV), 232-252 (VGFS…IISL), and 266-286 (VFSF…IDLA).

This sequence belongs to the UppP family.

The protein resides in the cell inner membrane. It carries out the reaction di-trans,octa-cis-undecaprenyl diphosphate + H2O = di-trans,octa-cis-undecaprenyl phosphate + phosphate + H(+). Catalyzes the dephosphorylation of undecaprenyl diphosphate (UPP). Confers resistance to bacitracin. In Alkalilimnicola ehrlichii (strain ATCC BAA-1101 / DSM 17681 / MLHE-1), this protein is Undecaprenyl-diphosphatase.